We begin with the raw amino-acid sequence, 425 residues long: Enolase (425 aa).

Q162 lines the (2R)-2-phosphoglycerate pocket. Residue E204 is the Proton donor of the active site. D241, E284, and D311 together coordinate Mg(2+). (2R)-2-phosphoglycerate is bound by residues K336, R365, S366, and K387. K336 functions as the Proton acceptor in the catalytic mechanism.

Belongs to the enolase family. Requires Mg(2+) as cofactor.

It localises to the cytoplasm. The protein localises to the secreted. It is found in the cell surface. The enzyme catalyses (2R)-2-phosphoglycerate = phosphoenolpyruvate + H2O. It functions in the pathway carbohydrate degradation; glycolysis; pyruvate from D-glyceraldehyde 3-phosphate: step 4/5. Its function is as follows. Catalyzes the reversible conversion of 2-phosphoglycerate (2-PG) into phosphoenolpyruvate (PEP). It is essential for the degradation of carbohydrates via glycolysis. The protein is Enolase of Brucella abortus (strain S19).